The following is a 280-amino-acid chain: RNA polymerase II holoenzyme cyclin-like subunit (280 aa).

One can recognise a Cyclin N-terminal domain in the interval 23 to 150; sequence ERRKGLEDIF…LIEELGTYLV (128 aa).

It belongs to the cyclin family. Cyclin C subfamily. In terms of assembly, component of the SRB8-11 complex, a regulatory module of the Mediator complex.

It is found in the nucleus. In terms of biological role, component of the SRB8-11 complex. The SRB8-11 complex is a regulatory module of the Mediator complex which is itself involved in regulation of basal and activated RNA polymerase II-dependent transcription. The SRB8-11 complex may be involved in the transcriptional repression of a subset of genes regulated by Mediator. It may inhibit the association of the Mediator complex with RNA polymerase II to form the holoenzyme complex. The SRB8-11 complex phosphorylates the C-terminal domain (CTD) of the largest subunit of RNA polymerase II. This is RNA polymerase II holoenzyme cyclin-like subunit (SSN8) from Yarrowia lipolytica (strain CLIB 122 / E 150) (Yeast).